We begin with the raw amino-acid sequence, 435 residues long: Serine--tRNA ligase (435 aa).

242-244 is an L-serine binding site; the sequence is TAE. ATP is bound at residue 273 to 275; sequence RSE. L-serine is bound at residue Glu296. ATP is bound at residue 360–363; the sequence is EISS. L-serine is bound at residue Ser396.

Belongs to the class-II aminoacyl-tRNA synthetase family. Type-1 seryl-tRNA synthetase subfamily. In terms of assembly, homodimer. The tRNA molecule binds across the dimer.

The protein localises to the cytoplasm. The enzyme catalyses tRNA(Ser) + L-serine + ATP = L-seryl-tRNA(Ser) + AMP + diphosphate + H(+). The catalysed reaction is tRNA(Sec) + L-serine + ATP = L-seryl-tRNA(Sec) + AMP + diphosphate + H(+). Its pathway is aminoacyl-tRNA biosynthesis; selenocysteinyl-tRNA(Sec) biosynthesis; L-seryl-tRNA(Sec) from L-serine and tRNA(Sec): step 1/1. Functionally, catalyzes the attachment of serine to tRNA(Ser). Is also able to aminoacylate tRNA(Sec) with serine, to form the misacylated tRNA L-seryl-tRNA(Sec), which will be further converted into selenocysteinyl-tRNA(Sec). The polypeptide is Serine--tRNA ligase (Vibrio campbellii (strain ATCC BAA-1116)).